A 786-amino-acid polypeptide reads, in one-letter code: Endonuclease MutS2 (786 aa).

335–342 provides a ligand contact to ATP; it reads GPNTGGKT. One can recognise a Smr domain in the interval 711–786; that stretch reads LDLRGERFEN…GLGVTVVELK (76 aa).

The protein belongs to the DNA mismatch repair MutS family. MutS2 subfamily. Homodimer. Binds to stalled ribosomes, contacting rRNA.

Endonuclease that is involved in the suppression of homologous recombination and thus may have a key role in the control of bacterial genetic diversity. Functionally, acts as a ribosome collision sensor, splitting the ribosome into its 2 subunits. Detects stalled/collided 70S ribosomes which it binds and splits by an ATP-hydrolysis driven conformational change. Acts upstream of the ribosome quality control system (RQC), a ribosome-associated complex that mediates the extraction of incompletely synthesized nascent chains from stalled ribosomes and their subsequent degradation. Probably generates substrates for RQC. This Bacillus cereus (strain AH820) protein is Endonuclease MutS2.